The chain runs to 513 residues: Alpha,alpha-trehalose-phosphate synthase [UDP-forming] (513 aa).

Tyrosine 40 is subject to Phosphotyrosine. D-glucose 6-phosphate is bound by residues tyrosine 104 and aspartate 158. 2 residues coordinate UDP: arginine 294 and lysine 299. Residues arginine 294 and lysine 299 each coordinate UDP-alpha-D-glucose. A D-glucose 6-phosphate-binding site is contributed by arginine 332. 393–401 (DGMNLVSYE) contacts UDP-alpha-D-glucose. 397 to 401 (LVSYE) serves as a coordination point for UDP. Residue serine 503 is modified to Phosphoserine.

This sequence belongs to the glycosyltransferase 20 family. As to quaternary structure, homomer. Component of the trehalose synthase complex that contains at least tps1, ntp1 and tpp1. Interacts with tpp1. Interacts with ntp1; the interaction is independent of stress conditions.

The protein localises to the cytoplasm. The protein resides in the nucleus. It catalyses the reaction D-glucose 6-phosphate + UDP-alpha-D-glucose = alpha,alpha-trehalose 6-phosphate + UDP + H(+). Its pathway is carbohydrate biosynthesis. Functionally, synthase catalytic subunit of the trehalose synthase complex that catalyzes the production of trehalose from glucose-6-phosphate and UDP-alpha-D-glucose in a two step process. The disaccharide trehalose serves as a storage carbohydrate that is mobilized during nutrient stress and spore germination. Together with ntp1, regulates the level of trehalose as a protectant for cell integrity during thermal and osmotic stress. The chain is Alpha,alpha-trehalose-phosphate synthase [UDP-forming] from Schizosaccharomyces pombe (strain 972 / ATCC 24843) (Fission yeast).